The primary structure comprises 232 residues: Megakaryocyte and platelet inhibitory receptor G6b (232 aa).

An N-terminal signal peptide occupies residues 1–17 (MALVLQLLPLLLSKVQG). Residues 18-140 (NPEVSLEGNP…GSTHGSEYSK (123 aa)) lie on the Extracellular side of the membrane. Asparagine 32 and asparagine 112 each carry an N-linked (GlcNAc...) asparagine glycan. Residues 141–161 (VLIPLLGFGLVLGLGALGLVW) traverse the membrane as a helical segment. Over 162–232 (WRRSCVPPSH…DASTVYAVVV (71 aa)) the chain is Cytoplasmic. 2 short sequence motifs (ITIM motif) span residues 200 to 205 (LHYADL) and 226 to 231 (TVYAVV). Tyrosine 202 is subject to Phosphotyrosine.

Interacts (via ITIM motif) with PTPN6 and PTPN11. Binds to heparin. N-glycosylated. In terms of processing, may be O-glycosylated. Post-translationally, phosphorylated.

The protein resides in the cell membrane. Functionally, inhibitory receptor that acts as a critical regulator of hematopoietic lineage differentiation, megakaryocyte function and platelet production. Inhibits platelet aggregation and activation by agonists such as ADP and collagen-related peptide. This regulation of megakaryocate function as well as platelet production ann activation is done through the inhibition (via the 2 ITIM motifs) of the receptors CLEC1B and GP6:FcRgamma signaling. Appears to operate in a calcium-independent manner. The protein is Megakaryocyte and platelet inhibitory receptor G6b of Rattus norvegicus (Rat).